A 350-amino-acid polypeptide reads, in one-letter code: Holliday junction branch migration complex subunit RuvB (350 aa).

The segment at 1 to 183 (MSAERLVNPH…FVAVHRLVFY (183 aa)) is large ATPase domain (RuvB-L). ATP contacts are provided by residues leucine 22, arginine 23, glycine 64, lysine 67, threonine 68, serine 69, 130–132 (EDF), arginine 173, tyrosine 183, and arginine 220. Threonine 68 provides a ligand contact to Mg(2+). The interval 184–254 (SDAAMTEIVS…VAREALAQLE (71 aa)) is small ATPAse domain (RuvB-S). The tract at residues 257-350 (ELGLDENDRR…ESGPQQGTLF (94 aa)) is head domain (RuvB-H). 2 residues coordinate DNA: arginine 312 and arginine 317.

This sequence belongs to the RuvB family. Homohexamer. Forms an RuvA(8)-RuvB(12)-Holliday junction (HJ) complex. HJ DNA is sandwiched between 2 RuvA tetramers; dsDNA enters through RuvA and exits via RuvB. An RuvB hexamer assembles on each DNA strand where it exits the tetramer. Each RuvB hexamer is contacted by two RuvA subunits (via domain III) on 2 adjacent RuvB subunits; this complex drives branch migration. In the full resolvosome a probable DNA-RuvA(4)-RuvB(12)-RuvC(2) complex forms which resolves the HJ.

The protein resides in the cytoplasm. It carries out the reaction ATP + H2O = ADP + phosphate + H(+). Its function is as follows. The RuvA-RuvB-RuvC complex processes Holliday junction (HJ) DNA during genetic recombination and DNA repair, while the RuvA-RuvB complex plays an important role in the rescue of blocked DNA replication forks via replication fork reversal (RFR). RuvA specifically binds to HJ cruciform DNA, conferring on it an open structure. The RuvB hexamer acts as an ATP-dependent pump, pulling dsDNA into and through the RuvAB complex. RuvB forms 2 homohexamers on either side of HJ DNA bound by 1 or 2 RuvA tetramers; 4 subunits per hexamer contact DNA at a time. Coordinated motions by a converter formed by DNA-disengaged RuvB subunits stimulates ATP hydrolysis and nucleotide exchange. Immobilization of the converter enables RuvB to convert the ATP-contained energy into a lever motion, pulling 2 nucleotides of DNA out of the RuvA tetramer per ATP hydrolyzed, thus driving DNA branch migration. The RuvB motors rotate together with the DNA substrate, which together with the progressing nucleotide cycle form the mechanistic basis for DNA recombination by continuous HJ branch migration. Branch migration allows RuvC to scan DNA until it finds its consensus sequence, where it cleaves and resolves cruciform DNA. The sequence is that of Holliday junction branch migration complex subunit RuvB from Chloroflexus aggregans (strain MD-66 / DSM 9485).